The following is a 428-amino-acid chain: F-box/LRR-repeat protein 3 (428 aa).

Residues 1–21 (MKRGGRDSDRNSSEEGTAEKS) show a composition bias toward basic and acidic residues. Residues 1–27 (MKRGGRDSDRNSSEEGTAEKSKKLRTT) form a disordered region. The region spanning 34 to 81 (CDWGNLLQDIILQVFKYLPLLDRAHASQVCRNWNQVFHMPDLWRCFEF) is the F-box domain. LRR repeat units lie at residues 119-146 (SSKE…GLIS), 181-207 (DTPV…KMSS), 208-233 (CPHV…ALNY), 234-259 (HLLS…RIDV), 316-341 (GRSV…VVCA), 343-368 (GLRP…GLGE), and 369-394 (CEVS…SIME).

Part of the SCF (SKP1-CUL1-F-box) E3 ubiquitin-protein ligase complex SCF(FBXL3) composed of CUL1, SKP1, RBX1 and FBXL3. Interacts with CRY1 and CRY2 (phosphorylated). Interacts with HDAC3. Interacts with KDM8. Undergoes autophagy-mediated degradation in the liver in a time-dependent manner. As to expression, widely expressed.

The protein resides in the nucleus. Its subcellular location is the cytoplasm. Its pathway is protein modification; protein ubiquitination. Substrate-recognition component of the SCF(FBXL3) E3 ubiquitin ligase complex involved in circadian rhythm function. Plays a key role in the maintenance of both the speed and the robustness of the circadian clock oscillation. The SCF(FBXL3) complex mainly acts in the nucleus and mediates ubiquitination and subsequent degradation of CRY1 and CRY2. Activity of the SCF(FBXL3) complex is counteracted by the SCF(FBXL21) complex. The sequence is that of F-box/LRR-repeat protein 3 (FBXL3) from Homo sapiens (Human).